A 478-amino-acid polypeptide reads, in one-letter code: Cytochrome c-552 (478 aa).

Positions 1–26 (MARKTLRARRFFSLIFPFFFITSVYA) are cleaved as a signal peptide. His94 serves as a coordination point for heme c. Heme contacts are provided by Cys122, Cys125, and Lys126. 6 residues coordinate heme c: Cys160, Cys163, His164, Cys209, Cys212, and His213. 4 residues coordinate Ca(2+): Glu215, Tyr216, Lys261, and Gln263. Position 216 (Tyr216) interacts with substrate. A substrate-binding site is contributed by His264. Residues His275, Cys282, Cys285, His286, His301, Cys314, Cys317, His318, and His393 each contribute to the heme c site.

It belongs to the cytochrome c-552 family. Requires Ca(2+) as cofactor. Heme c is required as a cofactor.

Its subcellular location is the periplasm. It catalyses the reaction 6 Fe(III)-[cytochrome c] + NH4(+) + 2 H2O = 6 Fe(II)-[cytochrome c] + nitrite + 8 H(+). The protein operates within nitrogen metabolism; nitrate reduction (assimilation). In terms of biological role, catalyzes the reduction of nitrite to ammonia, consuming six electrons in the process. The sequence is that of Cytochrome c-552 from Salmonella schwarzengrund (strain CVM19633).